The sequence spans 42 residues: Cytochrome b559 subunit beta (42 aa).

Residues Trp17–Ser33 form a helical membrane-spanning segment. Residue His21 coordinates heme.

The protein belongs to the PsbE/PsbF family. Heterodimer of an alpha subunit and a beta subunit. PSII is composed of 1 copy each of membrane proteins PsbA, PsbB, PsbC, PsbD, PsbE, PsbF, PsbH, PsbI, PsbJ, PsbK, PsbL, PsbM, PsbT, PsbX, PsbY, PsbZ, Psb30/Ycf12, at least 3 peripheral proteins of the oxygen-evolving complex and a large number of cofactors. It forms dimeric complexes. Heme b is required as a cofactor.

It is found in the plastid. The protein resides in the cyanelle thylakoid membrane. Functionally, this b-type cytochrome is tightly associated with the reaction center of photosystem II (PSII). PSII is a light-driven water:plastoquinone oxidoreductase that uses light energy to abstract electrons from H(2)O, generating O(2) and a proton gradient subsequently used for ATP formation. It consists of a core antenna complex that captures photons, and an electron transfer chain that converts photonic excitation into a charge separation. The protein is Cytochrome b559 subunit beta of Cyanophora paradoxa.